The following is a 535-amino-acid chain: GMP synthase [glutamine-hydrolyzing] (535 aa).

The Glutamine amidotransferase type-1 domain occupies 4–210 (KILILDFGSQ…VHEICKCKPD (207 aa)). C85 serves as the catalytic Nucleophile. Residues H184 and E186 contribute to the active site. The GMPS ATP-PPase domain maps to 211-403 (WVMGDYIAEA…LGLPREMVYR (193 aa)). 238-244 (SGGVDSS) provides a ligand contact to ATP.

As to quaternary structure, homodimer.

It carries out the reaction XMP + L-glutamine + ATP + H2O = GMP + L-glutamate + AMP + diphosphate + 2 H(+). The protein operates within purine metabolism; GMP biosynthesis; GMP from XMP (L-Gln route): step 1/1. Catalyzes the synthesis of GMP from XMP. This Polynucleobacter necessarius subsp. necessarius (strain STIR1) protein is GMP synthase [glutamine-hydrolyzing].